The primary structure comprises 80 residues: Small ribosomal subunit protein bS18c (80 aa).

Basic residues predominate over residues Met1–Pro19. The segment at Met1 to Glu24 is disordered.

The protein belongs to the bacterial ribosomal protein bS18 family. In terms of assembly, part of the 30S ribosomal subunit.

The protein localises to the plastid. Its subcellular location is the chloroplast. The protein is Small ribosomal subunit protein bS18c of Staurastrum punctulatum (Green alga).